Consider the following 515-residue polypeptide: Bifunctional purine biosynthesis protein PurH (515 aa).

An MGS-like domain is found at 1–145 (MTKRVLISVS…KNHASVTVVV (145 aa)).

The protein belongs to the PurH family.

It carries out the reaction (6R)-10-formyltetrahydrofolate + 5-amino-1-(5-phospho-beta-D-ribosyl)imidazole-4-carboxamide = 5-formamido-1-(5-phospho-D-ribosyl)imidazole-4-carboxamide + (6S)-5,6,7,8-tetrahydrofolate. The catalysed reaction is IMP + H2O = 5-formamido-1-(5-phospho-D-ribosyl)imidazole-4-carboxamide. It participates in purine metabolism; IMP biosynthesis via de novo pathway; 5-formamido-1-(5-phospho-D-ribosyl)imidazole-4-carboxamide from 5-amino-1-(5-phospho-D-ribosyl)imidazole-4-carboxamide (10-formyl THF route): step 1/1. It functions in the pathway purine metabolism; IMP biosynthesis via de novo pathway; IMP from 5-formamido-1-(5-phospho-D-ribosyl)imidazole-4-carboxamide: step 1/1. The protein is Bifunctional purine biosynthesis protein PurH of Streptococcus pneumoniae (strain P1031).